The sequence spans 344 residues: Galactoside alpha-(1,2)-fucosyltransferase 2 (344 aa).

The Cytoplasmic portion of the chain corresponds to 1-7 (MFSTQTF). A helical; Signal-anchor for type II membrane protein transmembrane segment spans residues 8 to 28 (FFFPTAPFILFVFTASTIFHL). The Lumenal portion of the chain corresponds to 29 to 344 (HQRLEKMQPT…PADLSPLLKH (316 aa)). 4 N-linked (GlcNAc...) asparagine glycosylation sites follow: asparagine 189, asparagine 255, asparagine 283, and asparagine 309.

In terms of tissue distribution, expressed in brain, heart, lung, intestin and kidney.

The protein localises to the golgi apparatus. Its subcellular location is the golgi stack membrane. The enzyme catalyses a beta-D-galactosyl-(1-&gt;3)-N-acetyl-beta-D-glucosaminyl derivative + GDP-beta-L-fucose = an alpha-L-Fuc-(1-&gt;2)-beta-D-Gal-(1-&gt;3)-beta-D-GlcNAc derivative + GDP + H(+). It carries out the reaction a beta-D-galactosyl-(1-&gt;4)-N-acetyl-beta-D-glucosaminyl derivative + GDP-beta-L-fucose = an alpha-L-Fuc-(1-&gt;2)-beta-D-Gal-(1-&gt;4)-beta-D-GlcNAc derivative + GDP + H(+). It catalyses the reaction a ganglioside GM1 + GDP-beta-L-fucose = a ganglioside Fuc-GM1 + GDP + H(+). The catalysed reaction is a neolactoside nLc4Cer + GDP-beta-L-fucose = a neolactoside IV(2)-alpha-Fuc-nLc4Cer + GDP + H(+). The enzyme catalyses a neolactoside nLc4Cer(d18:1(4E)) + GDP-beta-L-fucose = a neolactoside IV(2)-alpha-Fuc-nLc4Cer(d18:1(4E)) + GDP + H(+). It carries out the reaction a ganglioside GA1 + GDP-beta-L-fucose = a ganglioside Fuc-GA1 + GDP + H(+). It catalyses the reaction Lc4Cer + GDP-beta-L-fucose = alpha-L-fucosyl-(1-&gt;2)-beta-D-galactosyl-(1-&gt;3)-N-acetyl-beta-D-glucosaminyl-(1-&gt;3)-beta-D-galactosyl-(1-&gt;4)-beta-D-glucosyl-(1&lt;-&gt;1')-ceramide + GDP + H(+). The catalysed reaction is a beta-D-Gal-(1-&gt;3)-beta-D-GlcNAc-(1-&gt;3)-beta-D-Gal-(1-&gt;4)-beta-D-Glc-(1&lt;-&gt;1')-Cer(d18:1(4E)) + GDP-beta-L-fucose = alpha-L-fucosyl-(1-&gt;2)- beta-D-galactosyl-(1-&gt;3)-N-acetyl-beta-D-glucosaminyl-(1-&gt;3)-beta-D-galactosyl-(1-&gt;4)-beta-D-glucosyl-(1&lt;-&gt;1')-N-acylsphing-4-enine + GDP + H(+). The enzyme catalyses a ganglioside GD1b + GDP-beta-L-fucose = a ganglioside Fuc-GD1b + GDP + H(+). It carries out the reaction a ganglioside GM1 (d18:1(4E)) + GDP-beta-L-fucose = a ganglioside Fuc-GM1 (d18:1(4E)) + GDP + H(+). It catalyses the reaction a globoside GalGb4Cer (d18:1(4E)) + GDP-beta-L-fucose = a globoside Globo-H (d18:1(4E)) + GDP + H(+). The catalysed reaction is a lactoside III(4)-a-Fuc-Lc4Cer + GDP-beta-L-fucose = a lactoside IV(2),III(4)-a-[Fuc]2-Lc4Cer + GDP + H(+). The enzyme catalyses beta-D-galactosyl-(1-&gt;3)-N-acetyl-D-galactosamine + GDP-beta-L-fucose = alpha-L-fucosyl-(1-&gt;2)-beta-D-galactosyl-(1-&gt;3)-N-acetyl-D-galactosamine + GDP + H(+). It participates in protein modification; protein glycosylation. In terms of biological role, catalyzes the transfer of L-fucose, from a guanosine diphosphate-beta-L-fucose, to the terminal galactose on both O- and N-linked glycans chains of cell surface glycoproteins and glycolipids and the resulting epitope regulates several processes such as cell-cell interaction including host-microbe interaction, cell surface expression and cell proliferation. Preferentially fucosylates gangliosides GA1 and GM1 in the antrum, cecum and colon and in the female reproductive organs. Fucosylated host glycoproteins or glycolipids mediate interaction with intestinal microbiota influencing its composition. Creates a soluble precursor oligosaccharide FuC-alpha ((1,2)Galbeta-) called the H antigen which is an essential substrate for the final step in the soluble ABO blood group antigen synthesis pathway. The sequence is that of Galactoside alpha-(1,2)-fucosyltransferase 2 from Bos taurus (Bovine).